An 829-amino-acid polypeptide reads, in one-letter code: Probable beta-glucosidase H (829 aa).

Aspartate 225 is an active-site residue. Residues 389 to 548 (RMLSNAVIRF…DPEQMVRDAV (160 aa)) form the PA14 domain. N-linked (GlcNAc...) asparagine glycosylation is found at asparagine 416, asparagine 431, asparagine 473, asparagine 602, and asparagine 627.

This sequence belongs to the glycosyl hydrolase 3 family.

It localises to the secreted. The enzyme catalyses Hydrolysis of terminal, non-reducing beta-D-glucosyl residues with release of beta-D-glucose.. It participates in glycan metabolism; cellulose degradation. Beta-glucosidases are one of a number of cellulolytic enzymes involved in the degradation of cellulosic biomass. Catalyzes the last step releasing glucose from the inhibitory cellobiose. The sequence is that of Probable beta-glucosidase H (bglH) from Aspergillus clavatus (strain ATCC 1007 / CBS 513.65 / DSM 816 / NCTC 3887 / NRRL 1 / QM 1276 / 107).